The sequence spans 244 residues: Phosphoadenosine 5'-phosphosulfate reductase (244 aa).

The active-site Nucleophile; cysteine thiosulfonate intermediate is C239.

This sequence belongs to the PAPS reductase family. CysH subfamily.

It localises to the cytoplasm. It carries out the reaction [thioredoxin]-disulfide + sulfite + adenosine 3',5'-bisphosphate + 2 H(+) = [thioredoxin]-dithiol + 3'-phosphoadenylyl sulfate. The protein operates within sulfur metabolism; hydrogen sulfide biosynthesis; sulfite from sulfate: step 3/3. Functionally, catalyzes the formation of sulfite from phosphoadenosine 5'-phosphosulfate (PAPS) using thioredoxin as an electron donor. This is Phosphoadenosine 5'-phosphosulfate reductase from Salmonella arizonae (strain ATCC BAA-731 / CDC346-86 / RSK2980).